A 339-amino-acid chain; its full sequence is Phosphate acyltransferase (339 aa).

Belongs to the PlsX family. Homodimer. Probably interacts with PlsY.

The protein localises to the cytoplasm. It catalyses the reaction a fatty acyl-[ACP] + phosphate = an acyl phosphate + holo-[ACP]. The protein operates within lipid metabolism; phospholipid metabolism. Catalyzes the reversible formation of acyl-phosphate (acyl-PO(4)) from acyl-[acyl-carrier-protein] (acyl-ACP). This enzyme utilizes acyl-ACP as fatty acyl donor, but not acyl-CoA. This is Phosphate acyltransferase from Moorella thermoacetica (strain ATCC 39073 / JCM 9320).